A 352-amino-acid chain; its full sequence is Protein RecA (352 aa).

ATP is bound at residue 65–72 (GPESSGKT).

This sequence belongs to the RecA family.

It is found in the cytoplasm. In terms of biological role, can catalyze the hydrolysis of ATP in the presence of single-stranded DNA, the ATP-dependent uptake of single-stranded DNA by duplex DNA, and the ATP-dependent hybridization of homologous single-stranded DNAs. It interacts with LexA causing its activation and leading to its autocatalytic cleavage. This Pseudomonas fluorescens (strain Pf0-1) protein is Protein RecA.